Reading from the N-terminus, the 305-residue chain is Ribosomal RNA small subunit methyltransferase H (305 aa).

Residues 46–48, D65, F92, D108, and H115 contribute to the S-adenosyl-L-methionine site; that span reads GGH.

This sequence belongs to the methyltransferase superfamily. RsmH family.

It is found in the cytoplasm. The enzyme catalyses cytidine(1402) in 16S rRNA + S-adenosyl-L-methionine = N(4)-methylcytidine(1402) in 16S rRNA + S-adenosyl-L-homocysteine + H(+). In terms of biological role, specifically methylates the N4 position of cytidine in position 1402 (C1402) of 16S rRNA. This is Ribosomal RNA small subunit methyltransferase H from Trichormus variabilis (strain ATCC 29413 / PCC 7937) (Anabaena variabilis).